The sequence spans 490 residues: N-succinylglutamate 5-semialdehyde dehydrogenase (490 aa).

220–225 (GSANTG) provides a ligand contact to NAD(+). Residues glutamate 243 and cysteine 277 contribute to the active site.

The protein belongs to the aldehyde dehydrogenase family. AstD subfamily.

The catalysed reaction is N-succinyl-L-glutamate 5-semialdehyde + NAD(+) + H2O = N-succinyl-L-glutamate + NADH + 2 H(+). It functions in the pathway amino-acid degradation; L-arginine degradation via AST pathway; L-glutamate and succinate from L-arginine: step 4/5. Functionally, catalyzes the NAD-dependent reduction of succinylglutamate semialdehyde into succinylglutamate. This is N-succinylglutamate 5-semialdehyde dehydrogenase from Shigella dysenteriae serotype 1 (strain Sd197).